Reading from the N-terminus, the 64-residue chain is uncharacterized protein (64 aa).

It localises to the mitochondrion. This is an uncharacterized protein from Marchantia polymorpha (Common liverwort).